A 491-amino-acid polypeptide reads, in one-letter code: Cytosolic Fe-S cluster assembly factor NAR1 (491 aa).

Residues Cys20, Cys59, Cys62, Cys65, Cys177, Cys231, Cys412, and Cys416 each contribute to the [4Fe-4S] cluster site.

It belongs to the NARF family. As to quaternary structure, interacts with CIA1.

It localises to the cytoplasm. The protein resides in the nucleus. Its function is as follows. Essential component of a cytosolic Fe/S protein assembly machinery. Required for maturation of extramitochondrial Fe/S proteins. May play a role in the transfer of pre-assembled Fe/S clusters to target apoproteins. The chain is Cytosolic Fe-S cluster assembly factor NAR1 (NAR1) from Saccharomyces cerevisiae (strain ATCC 204508 / S288c) (Baker's yeast).